A 263-amino-acid polypeptide reads, in one-letter code: Endonuclease 8 (263 aa).

Residue proline 2 is the Schiff-base intermediate with DNA of the active site. Glutamate 3 acts as the Proton donor in catalysis. The active-site Proton donor; for beta-elimination activity is lysine 53. DNA contacts are provided by glutamine 70, arginine 125, and asparagine 169. An FPG-type zinc finger spans residues 229–263; sequence KVFHRDGELCERCGGIIEKTTLSSRPFYWCPGCQH. Arginine 253 serves as the catalytic Proton donor; for delta-elimination activity.

It belongs to the FPG family. The cofactor is Zn(2+).

It carries out the reaction 2'-deoxyribonucleotide-(2'-deoxyribose 5'-phosphate)-2'-deoxyribonucleotide-DNA = a 3'-end 2'-deoxyribonucleotide-(2,3-dehydro-2,3-deoxyribose 5'-phosphate)-DNA + a 5'-end 5'-phospho-2'-deoxyribonucleoside-DNA + H(+). Its function is as follows. Involved in base excision repair of DNA damaged by oxidation or by mutagenic agents. Acts as a DNA glycosylase that recognizes and removes damaged bases. Has a preference for oxidized pyrimidines, such as thymine glycol, 5,6-dihydrouracil and 5,6-dihydrothymine. Has AP (apurinic/apyrimidinic) lyase activity and introduces nicks in the DNA strand. Cleaves the DNA backbone by beta-delta elimination to generate a single-strand break at the site of the removed base with both 3'- and 5'-phosphates. This chain is Endonuclease 8, found in Shigella flexneri serotype 5b (strain 8401).